We begin with the raw amino-acid sequence, 1197 residues long: Sensor protein EvgS (1197 aa).

An N-terminal signal peptide occupies residues 1–21 (MKFLPYIFLLCCGLWSTISFA). Topologically, residues 22–325 (DEDYIEYRGI…SMTDENGSVR (304 aa)) are cytoplasmic. Residues 326–346 (GVMGDILNIITLQTGLNFSPI) traverse the membrane as a helical segment. Topologically, residues 347–537 (TVSHNIHAGT…TWDLYSEQFY (191 aa)) are periplasmic. The helical transmembrane segment at 538-558 (IVTTLSVLLVGSSLLWGFYLL) threads the bilayer. Topologically, residues 559 to 1197 (RSVRRRKVIQ…EIAVFCQKND (639 aa)) are cytoplasmic. Positions 718–938 (TMSHEIRTPI…TFTITIPVEI (221 aa)) constitute a Histidine kinase domain. Position 721 is a phosphohistidine; by autocatalysis (histidine 721). Positions 960–1074 (SILIADDHPT…VLKTHLSQLH (115 aa)) constitute a Response regulatory domain. Position 1009 is a 4-aspartylphosphate (aspartate 1009). An HPt domain is found at 1098–1197 (DLQLMQEILM…EIAVFCQKND (100 aa)). A Phosphohistidine modification is found at histidine 1137.

Activation requires a sequential transfer of a phosphate group from a His in the primary transmitter domain, to an Asp in the receiver domain and to a His in the secondary transmitter domain.

It localises to the cell inner membrane. The enzyme catalyses ATP + protein L-histidine = ADP + protein N-phospho-L-histidine.. In terms of biological role, member of the two-component regulatory system EvgS/EvgA. Phosphorylates EvgA via a four-step phosphorelay in response to environmental signals. The sequence is that of Sensor protein EvgS (evgS) from Escherichia coli (strain K12).